The chain runs to 72 residues: Neuropeptide IMFamide (72 aa).

An N-terminal signal peptide occupies residues 1–24 (MMRFTIGVVCLVAVLLSLAEVSEA). The residue at position 36 (phenylalanine 36) is a Phenylalanine amide. The propeptide occupies 40 to 72 (GPTEYDQRGKTFTALCEIATEACQAWFPSTENK).

In terms of tissue distribution, expressed in corpora cardiaca (CC), corpora allata (CA), antennal lobe (AL) and gnathal ganglion (GNG) (at protein level). Expression detected in only a few animals (at protein level).

It localises to the secreted. The protein is Neuropeptide IMFamide of Agrotis ipsilon (Black cutworm moth).